The chain runs to 135 residues: ATP synthase epsilon chain (135 aa).

Basic and acidic residues predominate over residues 89-100 (SGKAEAELEKAK). Residues 89–114 (SGKAEAELEKAKNQLSQNKDQGNSPE) form a disordered region. Positions 101–112 (NQLSQNKDQGNS) are enriched in polar residues.

Belongs to the ATPase epsilon chain family. In terms of assembly, F-type ATPases have 2 components, CF(1) - the catalytic core - and CF(0) - the membrane proton channel. CF(1) has five subunits: alpha(3), beta(3), gamma(1), delta(1), epsilon(1). CF(0) has three main subunits: a, b and c.

The protein resides in the cellular thylakoid membrane. Its function is as follows. Produces ATP from ADP in the presence of a proton gradient across the membrane. This chain is ATP synthase epsilon chain, found in Prochlorococcus marinus (strain NATL2A).